Reading from the N-terminus, the 544-residue chain is Cytochrome P450 82A1 (544 aa).

Cysteine 481 contributes to the heme binding site.

Belongs to the cytochrome P450 family. The cofactor is heme.

Its subcellular location is the membrane. This Pisum sativum (Garden pea) protein is Cytochrome P450 82A1 (CYP82A1).